The primary structure comprises 292 residues: uncharacterized protein (292 aa).

This is an uncharacterized protein from Aquifex aeolicus (strain VF5).